The primary structure comprises 131 residues: Protein E11 homolog (131 aa).

It belongs to the chordopoxvirinae E11 family.

The protein localises to the virion. This is Protein E11 homolog from Fowlpox virus (strain NVSL) (FPV).